Reading from the N-terminus, the 325-residue chain is UDP-N-acetylglucosamine transporter (325 aa).

8 helical membrane-spanning segments follow: residues 8 to 24, 42 to 58, 138 to 154, 173 to 189, 209 to 225, 246 to 262, 268 to 284, and 295 to 311; these read VSLG…VLTM, AVVV…ILLV, VYQW…VAFV, FVGL…SGFA, IQLG…GVYI, IVVV…AAVI, ILKG…STLI, and TSVF…ATFL.

The protein belongs to the nucleotide-sugar transporter family. SLC35A subfamily. As to quaternary structure, interacts with SLC35A2; the interaction is reduced in the presence of SLC35A4. Found in a complex with SLC35A2 and SLC35A4. Interacts with MGAT4B. Post-translationally, O-Glcnacylation regulates the stability of SLC35A3 and the specific complex formation with MGAT4B.

It is found in the golgi apparatus membrane. It catalyses the reaction UMP(out) + UDP-N-acetyl-alpha-D-glucosamine(in) = UMP(in) + UDP-N-acetyl-alpha-D-glucosamine(out). In terms of biological role, transports diphosphate-N-acetylglucosamine (UDP-GlcNAc) from the cytosol into the lumen of the Golgi apparatus, functioning as an antiporter that exchanges UDP-N-acetyl-alpha-D-glucosamine for UMP. May supply UDP-GlcNAc as substrate for Golgi-resident glycosyltransferases that generate highly branched, multiantennary complex N-glycans and keratan sulfate. However, the exact role of SLC35A3 still needs to be elucidated, it could be a member of a catalytically more efficient multiprotein complex rather than function independently as a single transporter. The protein is UDP-N-acetylglucosamine transporter (SLC35A3) of Homo sapiens (Human).